The chain runs to 263 residues: Linear gramicidin dehydrogenase LgrE (263 aa).

Ser-96 is a catalytic residue.

The protein belongs to the thioesterase family.

Its function is as follows. In the final step of gramicidin biosynthesis, reduces the pentadecapeptide-aldehyde intermediate, that is released from the terminal module of the non-ribosomal peptide synthetase LgrD, to the final product ethanolamine-containing gramicidin. The chain is Linear gramicidin dehydrogenase LgrE (lgrE) from Brevibacillus parabrevis.